Reading from the N-terminus, the 59-residue chain is Conotoxin ViVB (59 aa).

The first 22 residues, 1-22 (MRCVPVFIILLLLIPSAPSAAV), serve as a signal peptide directing secretion. Positions 23-46 (QPKTEKDDVPLASFHDSAMRILSR) are excised as a propeptide. Q47 is subject to Pyrrolidone carboxylic acid. V58 is subject to Valine amide.

Contains 2 disulfide bonds that can be either 'C1-C3, C2-C4' or 'C1-C4, C2-C3', since these disulfide connectivities have been observed for conotoxins with cysteine framework V (for examples, see AC P0DQQ7 and AC P81755). In terms of tissue distribution, expressed by the venom duct.

Its subcellular location is the secreted. The chain is Conotoxin ViVB from Conus virgo (Virgin cone).